We begin with the raw amino-acid sequence, 419 residues long: UDP-N-acetylglucosamine 1-carboxyvinyltransferase (419 aa).

Residue 22-23 (KN) coordinates phosphoenolpyruvate. A UDP-N-acetyl-alpha-D-glucosamine-binding site is contributed by R91. C115 (proton donor) is an active-site residue. C115 carries the 2-(S-cysteinyl)pyruvic acid O-phosphothioketal modification. UDP-N-acetyl-alpha-D-glucosamine-binding positions include 120–124 (RPVDL), 160–163 (KVSV), D305, and V327.

The protein belongs to the EPSP synthase family. MurA subfamily.

The protein resides in the cytoplasm. The catalysed reaction is phosphoenolpyruvate + UDP-N-acetyl-alpha-D-glucosamine = UDP-N-acetyl-3-O-(1-carboxyvinyl)-alpha-D-glucosamine + phosphate. Its pathway is cell wall biogenesis; peptidoglycan biosynthesis. Cell wall formation. Adds enolpyruvyl to UDP-N-acetylglucosamine. This chain is UDP-N-acetylglucosamine 1-carboxyvinyltransferase, found in Escherichia coli (strain K12 / MC4100 / BW2952).